Here is a 151-residue protein sequence, read N- to C-terminus: Ribosome maturation factor RimP (151 aa).

It belongs to the RimP family.

Its subcellular location is the cytoplasm. Functionally, required for maturation of 30S ribosomal subunits. The chain is Ribosome maturation factor RimP from Shewanella piezotolerans (strain WP3 / JCM 13877).